A 427-amino-acid chain; its full sequence is Serine hydroxymethyltransferase (427 aa).

(6S)-5,6,7,8-tetrahydrofolate is bound by residues leucine 122 and 126-128; that span reads GHL. Lysine 231 is modified (N6-(pyridoxal phosphate)lysine). (6S)-5,6,7,8-tetrahydrofolate-binding positions include glutamate 247 and 355 to 357; that span reads SPF.

It belongs to the SHMT family. Homodimer. Pyridoxal 5'-phosphate is required as a cofactor.

It localises to the cytoplasm. It carries out the reaction (6R)-5,10-methylene-5,6,7,8-tetrahydrofolate + glycine + H2O = (6S)-5,6,7,8-tetrahydrofolate + L-serine. The protein operates within one-carbon metabolism; tetrahydrofolate interconversion. Its pathway is amino-acid biosynthesis; glycine biosynthesis; glycine from L-serine: step 1/1. In terms of biological role, catalyzes the reversible interconversion of serine and glycine with tetrahydrofolate (THF) serving as the one-carbon carrier. This reaction serves as the major source of one-carbon groups required for the biosynthesis of purines, thymidylate, methionine, and other important biomolecules. Also exhibits THF-independent aldolase activity toward beta-hydroxyamino acids, producing glycine and aldehydes, via a retro-aldol mechanism. The protein is Serine hydroxymethyltransferase of Microcystis aeruginosa (strain NIES-843 / IAM M-2473).